Here is a 783-residue protein sequence, read N- to C-terminus: Heat shock transcription factor (783 aa).

The segment at methionine 1–serine 59 is disordered. Composition is skewed to low complexity over residues proline 11 to proline 23 and leucine 31 to leucine 42. Over residues asparagine 43 to serine 59 the composition is skewed to polar residues. A DNA-binding region spans residues methionine 78–proline 168. The tract at residues valine 181–serine 262 is disordered. Composition is skewed to low complexity over residues serine 189 to valine 199 and serine 209 to glycine 233. Positions asparagine 238–serine 262 are enriched in polar residues. Residues glycine 280–leucine 333 form an involved in trimerization region. 2 stretches are compositionally biased toward basic and acidic residues: residues arginine 350–alanine 372 and threonine 399–valine 415. Disordered stretches follow at residues arginine 350–proline 554, glutamine 599–leucine 652, and glutamine 736–serine 783. The segment covering glycine 418 to phenylalanine 448 has biased composition (polar residues). 4 stretches are compositionally biased toward low complexity: residues proline 452–serine 467, leucine 497–serine 511, proline 522–proline 550, and asparagine 616–methionine 632. Over residues glycine 742 to glycine 752 the composition is skewed to acidic residues. The segment covering aspartate 753–alanine 765 has biased composition (gly residues).

The protein belongs to the HSF family. As to quaternary structure, homotrimer. Homotrimerization increases the affinity of HSF1 to DNA. Interacts with transcriptional coregulator SSA1 on chromatin.

It is found in the nucleus. Functionally, DNA-binding transcription factor that specifically binds heat shock promoter elements (HSE) and activates transcription. Together with its coregulator SSA1, activates expression of laccase LAC1 during glucose starvation. The chain is Heat shock transcription factor from Cryptococcus neoformans var. neoformans serotype D (strain JEC21 / ATCC MYA-565) (Filobasidiella neoformans).